Consider the following 366-residue polypeptide: MNKVILYCRQGFEKECAAEITDKAAQQGVFGFARVKENSAYVIFECYQPDDADKLARELPFSSLIFARQMFVAGELLQDLPPEDRVTPVVGMLQGVVEKGGELRVEVADTNESKELMKFCRKFTVPLRTALRDAKILANFETPKRPVVHVFFIAPGCCYTGYSYTNNNSPFYMGIPRLKFPADAPSRSTLKLEEAFHVFIPADEWDERLANGMYAVDLGACPGGWTYQLVKRNMWVASVDNGPMAQSLMDTGQVTWLREDGFKYRPTRTNITWMVCDMVEKPAKVAALMAQWLVNGWCRETIFNLKLPMKKRYEEVSQNIASIQAQLDEHGINAQIQARQLYHDREEVTVHVRRWWAAVGGRRDER.

S-adenosyl-L-methionine-binding positions include S188, 221 to 224 (CPGG), D240, D260, and D277. K306 functions as the Proton acceptor in the catalytic mechanism.

The protein belongs to the class I-like SAM-binding methyltransferase superfamily. RNA methyltransferase RlmE family. RlmM subfamily. Monomer.

The protein localises to the cytoplasm. The catalysed reaction is cytidine(2498) in 23S rRNA + S-adenosyl-L-methionine = 2'-O-methylcytidine(2498) in 23S rRNA + S-adenosyl-L-homocysteine + H(+). In terms of biological role, catalyzes the 2'-O-methylation at nucleotide C2498 in 23S rRNA. The polypeptide is Ribosomal RNA large subunit methyltransferase M (Cronobacter sakazakii (strain ATCC BAA-894) (Enterobacter sakazakii)).